Here is a 362-residue protein sequence, read N- to C-terminus: D-alanine--D-alanine ligase (362 aa).

One can recognise an ATP-grasp domain in the interval 134 to 345 (KILAQRAGVP…YPDLITRLIR (212 aa)). 170–225 (GQLGTSNLFVKPSNQGSSVGITHVTDDSNYAEALAEAFKYDDKVLVEEGIVGTEVE) contacts ATP. Mg(2+)-binding residues include Asp-298, Glu-312, and Asn-314.

The protein belongs to the D-alanine--D-alanine ligase family. It depends on Mg(2+) as a cofactor. The cofactor is Mn(2+).

It is found in the cytoplasm. It catalyses the reaction 2 D-alanine + ATP = D-alanyl-D-alanine + ADP + phosphate + H(+). The protein operates within cell wall biogenesis; peptidoglycan biosynthesis. Cell wall formation. The sequence is that of D-alanine--D-alanine ligase from Lactobacillus delbrueckii subsp. bulgaricus (strain ATCC BAA-365 / Lb-18).